Consider the following 278-residue polypeptide: Orotidine 5'-phosphate decarboxylase (278 aa).

K96 acts as the Proton donor in catalysis.

The protein belongs to the OMP decarboxylase family. Type 2 subfamily.

The catalysed reaction is orotidine 5'-phosphate + H(+) = UMP + CO2. It functions in the pathway pyrimidine metabolism; UMP biosynthesis via de novo pathway; UMP from orotate: step 2/2. The chain is Orotidine 5'-phosphate decarboxylase from Salinispora arenicola (strain CNS-205).